Here is a 247-residue protein sequence, read N- to C-terminus: 1-(5-phosphoribosyl)-5-[(5-phosphoribosylamino)methylideneamino] imidazole-4-carboxamide isomerase 1 (247 aa).

Glutamate 8 (proton acceptor) is an active-site residue. The Proton donor role is filled by aspartate 128.

This sequence belongs to the HisA/HisF family.

Its subcellular location is the cytoplasm. The catalysed reaction is 1-(5-phospho-beta-D-ribosyl)-5-[(5-phospho-beta-D-ribosylamino)methylideneamino]imidazole-4-carboxamide = 5-[(5-phospho-1-deoxy-D-ribulos-1-ylimino)methylamino]-1-(5-phospho-beta-D-ribosyl)imidazole-4-carboxamide. The protein operates within amino-acid biosynthesis; L-histidine biosynthesis; L-histidine from 5-phospho-alpha-D-ribose 1-diphosphate: step 4/9. The protein is 1-(5-phosphoribosyl)-5-[(5-phosphoribosylamino)methylideneamino] imidazole-4-carboxamide isomerase 1 of Ruegeria sp. (strain TM1040) (Silicibacter sp.).